The primary structure comprises 249 residues: Ribonuclease PH (249 aa).

Residues Arg-86 and 124–126 (GTR) contribute to the phosphate site.

The protein belongs to the RNase PH family. Homohexameric ring arranged as a trimer of dimers.

It catalyses the reaction tRNA(n+1) + phosphate = tRNA(n) + a ribonucleoside 5'-diphosphate. In terms of biological role, phosphorolytic 3'-5' exoribonuclease that plays an important role in tRNA 3'-end maturation. Removes nucleotide residues following the 3'-CCA terminus of tRNAs; can also add nucleotides to the ends of RNA molecules by using nucleoside diphosphates as substrates, but this may not be physiologically important. Probably plays a role in initiation of 16S rRNA degradation (leading to ribosome degradation) during starvation. This chain is Ribonuclease PH, found in Clostridium botulinum (strain Alaska E43 / Type E3).